A 129-amino-acid chain; its full sequence is Fluoride-specific ion channel FluC (129 aa).

4 helical membrane-spanning segments follow: residues 1–21 (MLMK…LGSA), 35–55 (GGLP…IGFI), 71–91 (LFLV…IFEN), and 105–125 (AYLA…TFFA). 2 residues coordinate Na(+): Gly-79 and Thr-82.

Belongs to the fluoride channel Fluc/FEX (TC 1.A.43) family.

The protein localises to the cell inner membrane. It catalyses the reaction fluoride(in) = fluoride(out). Na(+) is not transported, but it plays an essential structural role and its presence is essential for fluoride channel function. Functionally, fluoride-specific ion channel. Important for reducing fluoride concentration in the cell, thus reducing its toxicity. The polypeptide is Fluoride-specific ion channel FluC (Chlorobium phaeobacteroides (strain DSM 266 / SMG 266 / 2430)).